We begin with the raw amino-acid sequence, 150 residues long: Putative HTH-type transcriptional regulator rrf2-like (150 aa).

Residues 1–139 (MITQKMKYAL…DSLTLEDMLA (139 aa)) enclose the HTH rrf2-type domain.

The sequence is that of Putative HTH-type transcriptional regulator rrf2-like from Rhodobacter capsulatus (strain ATCC BAA-309 / NBRC 16581 / SB1003).